We begin with the raw amino-acid sequence, 388 residues long: Succinate--CoA ligase [ADP-forming] subunit beta (388 aa).

The region spanning 9 to 244 (KQLFARSGLP…QSQEDPREAQ (236 aa)) is the ATP-grasp domain. ATP-binding positions include K46, 53–55 (GRG), E99, T102, and E107. The Mg(2+) site is built by N199 and D213. Residues N264 and 321–323 (GIV) contribute to the substrate site.

The protein belongs to the succinate/malate CoA ligase beta subunit family. Heterotetramer of two alpha and two beta subunits. Mg(2+) is required as a cofactor.

The enzyme catalyses succinate + ATP + CoA = succinyl-CoA + ADP + phosphate. It carries out the reaction GTP + succinate + CoA = succinyl-CoA + GDP + phosphate. It participates in carbohydrate metabolism; tricarboxylic acid cycle; succinate from succinyl-CoA (ligase route): step 1/1. In terms of biological role, succinyl-CoA synthetase functions in the citric acid cycle (TCA), coupling the hydrolysis of succinyl-CoA to the synthesis of either ATP or GTP and thus represents the only step of substrate-level phosphorylation in the TCA. The beta subunit provides nucleotide specificity of the enzyme and binds the substrate succinate, while the binding sites for coenzyme A and phosphate are found in the alpha subunit. The polypeptide is Succinate--CoA ligase [ADP-forming] subunit beta (Cronobacter sakazakii (strain ATCC BAA-894) (Enterobacter sakazakii)).